Reading from the N-terminus, the 87-residue chain is Putative regulatory protein CHY_1489 (87 aa).

It belongs to the RemA family.

In Carboxydothermus hydrogenoformans (strain ATCC BAA-161 / DSM 6008 / Z-2901), this protein is Putative regulatory protein CHY_1489.